Reading from the N-terminus, the 60-residue chain is MAQLKITLVRSAAHRLPKQRKIVKELGLGRINSSVVKPDDAATRGQIFHIAHLVDVEIIK.

The protein belongs to the universal ribosomal protein uL30 family. Part of the 50S ribosomal subunit.

This Lactiplantibacillus plantarum (strain ATCC BAA-793 / NCIMB 8826 / WCFS1) (Lactobacillus plantarum) protein is Large ribosomal subunit protein uL30.